Consider the following 298-residue polypeptide: Probable aspartoacylase (298 aa).

Zn(2+) contacts are provided by His13 and Glu16. Substrate contacts are provided by residues Arg54 and 61–62 (NR). Position 103 (His103) interacts with Zn(2+). Positions 161 and 271 each coordinate substrate.

The protein belongs to the AspA/AstE family. Aspartoacylase subfamily. Zn(2+) is required as a cofactor.

The catalysed reaction is an N-acyl-L-aspartate + H2O = a carboxylate + L-aspartate. The sequence is that of Probable aspartoacylase from Prochlorococcus marinus (strain MIT 9515).